Reading from the N-terminus, the 150-residue chain is Transcriptional repressor NrdR (150 aa).

Residues 3-34 (CPFCAHPDSKVVDSRPDKGGAAIRRRRECESC) fold into a zinc finger. The ATP-cone domain maps to 49 to 139 (PLVLKKDGRR…VYRSFKDVNE (91 aa)).

The protein belongs to the NrdR family. It depends on Zn(2+) as a cofactor.

Its function is as follows. Negatively regulates transcription of bacterial ribonucleotide reductase nrd genes and operons by binding to NrdR-boxes. This is Transcriptional repressor NrdR from Geobacter metallireducens (strain ATCC 53774 / DSM 7210 / GS-15).